Reading from the N-terminus, the 344-residue chain is Anthranilate phosphoribosyltransferase (344 aa).

5-phospho-alpha-D-ribose 1-diphosphate-binding positions include glycine 85, 88 to 89, threonine 93, 95 to 98, 113 to 121, and serine 125; these read GD, NIST, and KHGGRSVSS. Glycine 85 is a binding site for anthranilate. Serine 97 contributes to the Mg(2+) binding site. Arginine 171 lines the anthranilate pocket. Mg(2+) contacts are provided by aspartate 230 and glutamate 231.

It belongs to the anthranilate phosphoribosyltransferase family. Homodimer. The cofactor is Mg(2+).

It catalyses the reaction N-(5-phospho-beta-D-ribosyl)anthranilate + diphosphate = 5-phospho-alpha-D-ribose 1-diphosphate + anthranilate. It functions in the pathway amino-acid biosynthesis; L-tryptophan biosynthesis; L-tryptophan from chorismate: step 2/5. Functionally, catalyzes the transfer of the phosphoribosyl group of 5-phosphorylribose-1-pyrophosphate (PRPP) to anthranilate to yield N-(5'-phosphoribosyl)-anthranilate (PRA). This is Anthranilate phosphoribosyltransferase from Acidovorax ebreus (strain TPSY) (Diaphorobacter sp. (strain TPSY)).